A 465-amino-acid chain; its full sequence is Hepatocyte nuclear factor 6 (465 aa).

Disordered regions lie at residues 15–84 and 119–141; these read GVSH…GPLH and SDKF…HQRL. The span at 123–140 shows a compositional bias: basic residues; that stretch reads PHHHHHHHHHHHPHHHQR. The segment at residues 283–369 is a DNA-binding region (CUT); the sequence is GSNSGQMEEI…QRMSALRLAA (87 aa). The homeobox DNA-binding region spans 385–444; that stretch reads PKKPRLVFTDVQRRTLHAIFKENKRPSKELQITISQQLGLELSTVSNFFMNARRRSLDKW. Positions 443 to 465 are disordered; that stretch reads KWQDEGGSNSGSSSSSSSTCTKA. Residues 448-465 show a composition bias toward low complexity; sequence GGSNSGSSSSSSSTCTKA.

Belongs to the CUT homeobox family. As to quaternary structure, binds DNA as a monomer.

Its subcellular location is the nucleus. Functionally, transcriptional activator. Binds the consensus sequence 5'-DHWATTGAYTWWD-3' on a variety of gene promoters such as those of HNF3B and TTR. Important for liver genes transcription. Stimulates the expression of Onecut3 in the developing endoderm. In Mus musculus (Mouse), this protein is Hepatocyte nuclear factor 6 (Onecut1).